Reading from the N-terminus, the 158-residue chain is C-type lection lectoxin-Enh3 (158 aa).

The signal sequence occupies residues 1 to 23 (MGQFTVVSLGLLAMFLSLSGAKG). 3 disulfide bridges follow: Cys-26–Cys-37, Cys-54–Cys-154, and Cys-129–Cys-146. Residues 33 to 155 (RNGVCNKLFP…CASLHPFICQ (123 aa)) form the C-type lectin domain. The Mannose-binding signature appears at 119 to 121 (EPN). Ca(2+) is bound by residues Glu-127, Asn-142, and Asp-143.

It belongs to the true venom lectin family. In terms of tissue distribution, expressed by the venom gland.

It localises to the secreted. In terms of biological role, mannose-binding lectin which recognizes specific carbohydrate structures and agglutinates a variety of animal cells by binding to cell-surface glycoproteins and glycolipids. May be a calcium-dependent lectin. The sequence is that of C-type lection lectoxin-Enh3 from Pseudoferania polylepis (Macleay's water snake).